We begin with the raw amino-acid sequence, 509 residues long: Ribonuclease Y (509 aa).

The helical transmembrane segment at 5 to 25 (IAGVSGIAGAAVGAGACYLWL) threads the bilayer. Residues 199 to 265 (LINLVNLPSD…TRVIEILIED (67 aa)) form the KH domain. Residues 325-418 (ALAHTLEVAK…VCAADTLSAA (94 aa)) form the HD domain.

The protein belongs to the RNase Y family.

It localises to the cell membrane. Endoribonuclease that initiates mRNA decay. The sequence is that of Ribonuclease Y from Sulfurovum sp. (strain NBC37-1).